The sequence spans 349 residues: Heat-inducible transcription repressor HrcA (349 aa).

It belongs to the HrcA family.

Functionally, negative regulator of class I heat shock genes (grpE-dnaK-dnaJ and groELS operons). Prevents heat-shock induction of these operons. This chain is Heat-inducible transcription repressor HrcA, found in Mycoplasmoides gallisepticum (strain R(low / passage 15 / clone 2)) (Mycoplasma gallisepticum).